The following is an 89-amino-acid chain: Large ribosomal subunit protein bL28 (89 aa).

This sequence belongs to the bacterial ribosomal protein bL28 family.

This chain is Large ribosomal subunit protein bL28, found in Chlamydia abortus (strain DSM 27085 / S26/3) (Chlamydophila abortus).